A 994-amino-acid polypeptide reads, in one-letter code: Regulator of telomere elongation helicase 1 homolog (994 aa).

Positions Pro-15–Ala-300 constitute a Helicase ATP-binding domain. Residue Ser-50–Thr-57 coordinates ATP. [4Fe-4S] cluster contacts are provided by Cys-142, Cys-160, Cys-169, and Cys-208. A DEAH box motif is present at residues Asp-251 to His-254. The disordered stretch occupies residues Phe-876 to Pro-895. Residues Gly-882 to Ser-892 show a composition bias toward polar residues.

It belongs to the helicase family. RAD3/XPD subfamily.

It is found in the nucleus. The enzyme catalyses ATP + H2O = ADP + phosphate + H(+). In terms of biological role, a probable ATP-dependent DNA helicase implicated in DNA repair and the maintenance of genomic stability. Acts as an anti-recombinase to counteract toxic recombination and limit crossover during meiosis. Regulates meiotic recombination and crossover homeostasis by physically dissociating strand invasion events and thereby promotes noncrossover repair by meiotic synthesis dependent strand annealing (SDSA) as well as disassembly of D loop recombination intermediates. The sequence is that of Regulator of telomere elongation helicase 1 homolog from Caenorhabditis elegans.